The sequence spans 181 residues: Probable toxin TacT (181 aa).

The protein belongs to the acetyltransferase family. As to quaternary structure, forms a complex with cognate antitoxin TacA.

Probable toxin component of a type II toxin-antitoxin (TA) system. Might acetylate tRNA and inhibit translation. Should be neutralized by cognate antitoxin TacA (y4aR). The sequence is that of Probable toxin TacT from Sinorhizobium fredii (strain NBRC 101917 / NGR234).